Reading from the N-terminus, the 89-residue chain is Phosphocarrier protein HPr (89 aa).

Positions 1-88 (MLQRDTTIIN…ALIANRFGEG (88 aa)) constitute an HPr domain. Residue H15 is the Pros-phosphohistidine intermediate of the active site.

Belongs to the HPr family.

It localises to the cytoplasm. In terms of biological role, general (non sugar-specific) component of the phosphoenolpyruvate-dependent sugar phosphotransferase system (sugar PTS). This major carbohydrate active-transport system catalyzes the phosphorylation of incoming sugar substrates concomitantly with their translocation across the cell membrane. The phosphoryl group from phosphoenolpyruvate (PEP) is transferred to the phosphoryl carrier protein HPr by enzyme I. Phospho-HPr then transfers it to the PTS EIIA domain. The protein is Phosphocarrier protein HPr (phbH) of Cupriavidus necator (strain ATCC 17699 / DSM 428 / KCTC 22496 / NCIMB 10442 / H16 / Stanier 337) (Ralstonia eutropha).